Reading from the N-terminus, the 313-residue chain is Porphobilinogen deaminase (313 aa).

At cysteine 242 the chain carries S-(dipyrrolylmethanemethyl)cysteine.

Belongs to the HMBS family. As to quaternary structure, monomer. The cofactor is dipyrromethane.

The enzyme catalyses 4 porphobilinogen + H2O = hydroxymethylbilane + 4 NH4(+). The protein operates within porphyrin-containing compound metabolism; protoporphyrin-IX biosynthesis; coproporphyrinogen-III from 5-aminolevulinate: step 2/4. Functionally, tetrapolymerization of the monopyrrole PBG into the hydroxymethylbilane pre-uroporphyrinogen in several discrete steps. This is Porphobilinogen deaminase from Yersinia enterocolitica serotype O:8 / biotype 1B (strain NCTC 13174 / 8081).